A 375-amino-acid chain; its full sequence is Outer membrane porin C (375 aa).

The signal sequence occupies residues 1–21 (MKVKVLSLLVPALLVAGAANA). At 22 to 33 (AEVYNKDGNKLD) the chain is on the periplasmic side. Residues 34–42 (LYGKVDGLH) traverse the membrane as a beta stranded segment. Topologically, residues 43–53 (YFSDDKSVDGD) are extracellular. The chain crosses the membrane as a beta stranded span at residues 54 to 63 (QTYMRLGFKG). At 64–73 (ETQVTDQLTG) the chain is on the periplasmic side. A beta stranded transmembrane segment spans residues 74 to 84 (YGQWEYQIQGN). Residues 85–91 (APESENN) lie on the Extracellular side of the membrane. Residues 92-101 (SWTRVAFAGL) traverse the membrane as a beta stranded segment. The Periplasmic portion of the chain corresponds to 102–106 (KFQDI). A beta stranded transmembrane segment spans residues 107-115 (GSFDYGRNY). The Extracellular portion of the chain corresponds to 116–141 (GVVYDVTSWTDVLPEFGGDTYGSDNF). Residues 142 to 154 (MQQRGNGFATYRN) form a beta stranded membrane-spanning segment. Residues 155–163 (TDFFGLVDG) lie on the Periplasmic side of the membrane. A beta stranded transmembrane segment spans residues 164–171 (LNFAVQYQ). Residues 172–204 (GQNGSVSGENDPDFTGHGITNNGRKALRQNGDG) are Extracellular-facing. The chain crosses the membrane as a beta stranded span at residues 205 to 211 (VGGSITY). At 212–215 (DYEG) the chain is on the periplasmic side. Residues 216 to 223 (FGVGAAVS) form a beta stranded membrane-spanning segment. At 224–245 (SSKRTDAQNTAAYIGNGDRAET) the chain is on the extracellular side. A beta stranded membrane pass occupies residues 246–252 (YTGGLKY). Over 253–256 (DANN) the chain is Periplasmic. Residues 257-264 (IYLAAQYT) form a beta stranded membrane-spanning segment. Topologically, residues 265–273 (QTYNATRVG) are extracellular. Residues 274 to 290 (SLGWANKAQNFEAVAQY) traverse the membrane as a beta stranded segment. Topologically, residues 291–295 (QFDFG) are periplasmic. A beta stranded transmembrane segment spans residues 296–303 (LRPSVAYL). The Extracellular segment spans residues 304–326 (QSKGKNLGTIGTRNYDDEDILKY). Residues 327–334 (VDVGATYY) traverse the membrane as a beta stranded segment. Topologically, residues 335–338 (FNKN) are periplasmic. A beta stranded membrane pass occupies residues 339–346 (MSTYVDYK). Residues 347–366 (INLLDDNQFTRDAGINTDNI) lie on the Extracellular side of the membrane. The beta stranded transmembrane segment at 367 to 374 (VALGLVYQ) threads the bilayer. Phenylalanine 375 is a topological domain (periplasmic).

It belongs to the Gram-negative porin family. Homotrimer. Forms mixed heterotrimers with OmpF; other mixed heterotrimers are also probable.

Its subcellular location is the cell outer membrane. In terms of biological role, forms pores that allow passive diffusion of small molecules across the outer membrane. Functionally, (Microbial infection) Supports colicin E5 entry in the absence of its major receptor OmpF. Its function is as follows. (Microbial infection) A mixed OmpC-OmpF heterotrimer is the outer membrane receptor for toxin CdiA-EC536. The protein is Outer membrane porin C (ompC) of Escherichia coli O6:K15:H31 (strain 536 / UPEC).